The chain runs to 160 residues: Phosphopantetheine adenylyltransferase (160 aa).

Serine 10 is a substrate binding site. Residues 10–11 (SF) and histidine 18 contribute to the ATP site. 3 residues coordinate substrate: lysine 42, threonine 74, and arginine 88. ATP contacts are provided by residues 89-91 (GLR), glutamate 99, and 124-130 (YSFISST).

This sequence belongs to the bacterial CoaD family. In terms of assembly, homohexamer. Requires Mg(2+) as cofactor.

Its subcellular location is the cytoplasm. The catalysed reaction is (R)-4'-phosphopantetheine + ATP + H(+) = 3'-dephospho-CoA + diphosphate. The protein operates within cofactor biosynthesis; coenzyme A biosynthesis; CoA from (R)-pantothenate: step 4/5. Functionally, reversibly transfers an adenylyl group from ATP to 4'-phosphopantetheine, yielding dephospho-CoA (dPCoA) and pyrophosphate. The chain is Phosphopantetheine adenylyltransferase from Leptospira borgpetersenii serovar Hardjo-bovis (strain L550).